The primary structure comprises 35 residues: Photosystem II reaction center protein M (35 aa).

Residues 7-27 form a helical membrane-spanning segment; the sequence is GLLATILVILVPSIFLVILYV.

This sequence belongs to the PsbM family. PSII is composed of 1 copy each of membrane proteins PsbA, PsbB, PsbC, PsbD, PsbE, PsbF, PsbH, PsbI, PsbJ, PsbK, PsbL, PsbM, PsbT, PsbX, PsbY, PsbZ, Psb30/Ycf12, peripheral proteins PsbO, CyanoQ (PsbQ), PsbU, PsbV and a large number of cofactors. It forms dimeric complexes.

The protein localises to the cellular thylakoid membrane. Functionally, one of the components of the core complex of photosystem II (PSII). PSII is a light-driven water:plastoquinone oxidoreductase that uses light energy to abstract electrons from H(2)O, generating O(2) and a proton gradient subsequently used for ATP formation. It consists of a core antenna complex that captures photons, and an electron transfer chain that converts photonic excitation into a charge separation. This subunit is found at the monomer-monomer interface. In Synechococcus sp. (strain JA-3-3Ab) (Cyanobacteria bacterium Yellowstone A-Prime), this protein is Photosystem II reaction center protein M.